We begin with the raw amino-acid sequence, 245 residues long: DNA polymerase sliding clamp (245 aa).

It belongs to the PCNA family. Homotrimer. The subunits circularize to form a toroid; DNA passes through its center. Replication factor C (RFC) is required to load the toroid on the DNA.

Sliding clamp subunit that acts as a moving platform for DNA processing. Responsible for tethering the catalytic subunit of DNA polymerase and other proteins to DNA during high-speed replication. The chain is DNA polymerase sliding clamp from Methanococcoides burtonii (strain DSM 6242 / NBRC 107633 / OCM 468 / ACE-M).